The chain runs to 605 residues: F-box/WD repeat-containing protein pof1 (605 aa).

The 47-residue stretch at 107–153 (LDFLSLLPVEISFRILSFLDARSLCQAAQVSKHWKELADDDVIWHRM) folds into the F-box domain. Residues 195-212 (GVDQAHESSPVKKAKLDD) are compositionally biased toward basic and acidic residues. A disordered region spans residues 195–231 (GVDQAHESSPVKKAKLDDYPTSSNEETISSVKPPSPN). Residues 214 to 231 (PTSSNEETISSVKPPSPN) show a composition bias toward polar residues. Residues S229 and S232 each carry the phosphoserine modification. 7 WD repeats span residues 271-299 (GHSDGVMCLQLVRNILASGSYDATIRLWN), 311-339 (GHSSGVTCLQFDQCKLISGSMDKTIRIWN), 350-379 (HGHTDSVLCLTFDSTLLVSGSADCTVKLWH), 390-420 (GHTGPVNSVRIIRDRGLVLSGSDDSTIKIWS), 432-460 (AHIGPVQSLALADSRLFSCSLDGTIKQWD), 472-500 (GHIEGVWEIAADHLRLISGAHDGVVKVWE), and 510-538 (NHSEPVTSVALGDCEVVSGSEDGKIYLWL).

In terms of assembly, a part of the E3 ubiquitin ligase Skp1-Cullin-1-F-box (SCF) complex. Interacts with cul1, skp1 and phosphorylated zip1.

Its subcellular location is the nucleus. Its function is as follows. Probably recognizes and binds to some phosphorylated proteins and promotes their ubiquitination and degradation. Required for the inactivation of zip1 via ubiquitination. The sequence is that of F-box/WD repeat-containing protein pof1 (pof1) from Schizosaccharomyces pombe (strain 972 / ATCC 24843) (Fission yeast).